The primary structure comprises 98 residues: DNA-binding protein Fis (98 aa).

Positions 74 to 93 (QTRAALMMGINRGTLRKKLK) form a DNA-binding region, H-T-H motif.

Belongs to the transcriptional regulatory Fis family. In terms of assembly, homodimer.

Its function is as follows. Activates ribosomal RNA transcription. Plays a direct role in upstream activation of rRNA promoters. This Citrobacter koseri (strain ATCC BAA-895 / CDC 4225-83 / SGSC4696) protein is DNA-binding protein Fis.